A 557-amino-acid chain; its full sequence is T-complex protein 1 subunit eta (557 aa).

Ala2 carries the post-translational modification N-acetylalanine. The interval 529–557 (PKSESAQGDAAGAMGRGRGGGRGRGMRRR) is disordered. Basic residues predominate over residues 547–557 (GGGRGRGMRRR).

This sequence belongs to the TCP-1 chaperonin family. Heterooligomeric complex of about 850 to 900 kDa that forms two stacked rings, 12 to 16 nm in diameter. Interacts with KNAT1.

It is found in the cytoplasm. Molecular chaperone; assists the folding of proteins upon ATP hydrolysis. Known to play a role, in vitro, in the folding of actin and tubulin. This chain is T-complex protein 1 subunit eta, found in Arabidopsis thaliana (Mouse-ear cress).